A 201-amino-acid chain; its full sequence is Small ribosomal subunit protein uS4 (201 aa).

Positions 91 to 157 (CRLDNVVYRA…TPFIIAKETI (67 aa)) constitute an S4 RNA-binding domain.

It belongs to the universal ribosomal protein uS4 family. Part of the 30S ribosomal subunit. Contacts protein S5. The interaction surface between S4 and S5 is involved in control of translational fidelity.

In terms of biological role, one of the primary rRNA binding proteins, it binds directly to 16S rRNA where it nucleates assembly of the body of the 30S subunit. With S5 and S12 plays an important role in translational accuracy. In Saccharopolyspora erythraea (strain ATCC 11635 / DSM 40517 / JCM 4748 / NBRC 13426 / NCIMB 8594 / NRRL 2338), this protein is Small ribosomal subunit protein uS4.